The sequence spans 139 residues: Small ribosomal subunit protein uS9 (139 aa).

It belongs to the universal ribosomal protein uS9 family.

In Coxiella burnetii (strain CbuG_Q212) (Coxiella burnetii (strain Q212)), this protein is Small ribosomal subunit protein uS9.